A 101-amino-acid chain; its full sequence is MDVAPNWYLALSAVLFTIGTFGVLFRRNAIVVLMSVELMLNAVNLTLVTFSQSMGDPSGQLLVFFSIAVAAAEAAVGLAIVIAIFRSQVTVDITEINLFKH.

The next 3 membrane-spanning stretches (helical) occupy residues 5 to 25, 30 to 50, and 62 to 82; these read PNWYLALSAVLFTIGTFGVLF, IVVLMSVELMLNAVNLTLVTF, and LVFFSIAVAAAEAAVGLAIVI.

The protein belongs to the complex I subunit 4L family. NDH-1 is composed of 14 different subunits. Subunits NuoA, H, J, K, L, M, N constitute the membrane sector of the complex.

The protein localises to the cell inner membrane. It catalyses the reaction a quinone + NADH + 5 H(+)(in) = a quinol + NAD(+) + 4 H(+)(out). NDH-1 shuttles electrons from NADH, via FMN and iron-sulfur (Fe-S) centers, to quinones in the respiratory chain. The immediate electron acceptor for the enzyme in this species is believed to be a menaquinone. Couples the redox reaction to proton translocation (for every two electrons transferred, four hydrogen ions are translocated across the cytoplasmic membrane), and thus conserves the redox energy in a proton gradient. This chain is NADH-quinone oxidoreductase subunit K, found in Salinibacter ruber (strain DSM 13855 / M31).